We begin with the raw amino-acid sequence, 451 residues long: ESX secretion system protein YukC (451 aa).

Residues 221 to 241 (IGLGLIVLLVPALIYSMYALF) traverse the membrane as a helical segment. A coiled-coil region spans residues 362–447 (DEDIQKELDS…KKETEKKDEK (86 aa)). A compositionally biased stretch (basic and acidic residues) spans 376–386 (LEKAQKERQEN). The interval 376–451 (LEKAQKERQE…EKKDEKKDDK (76 aa)) is disordered. The segment covering 387–397 (KQSNSETSLVD) has biased composition (polar residues). Over residues 406-451 (DEEKQAEEKAAEEKAAAEEKAKKEEQKEKEDEKKETEKKDEKKDDK) the composition is skewed to basic and acidic residues.

This sequence belongs to the EssB family.

The protein localises to the cell membrane. Required for YukE secretion. Probable component or regulator of the ESX/ESAT-6-like secretion system (BsEss). Required to deliver LXG toxins to target cells. The sequence is that of ESX secretion system protein YukC (yukC) from Bacillus subtilis (strain 168).